The chain runs to 208 residues: Uracil phosphoribosyltransferase (208 aa).

5-phospho-alpha-D-ribose 1-diphosphate contacts are provided by residues arginine 78, arginine 103, and 130 to 138 (DPMLATGGS). Uracil is bound by residues isoleucine 193 and 198–200 (GDA). Aspartate 199 contacts 5-phospho-alpha-D-ribose 1-diphosphate.

This sequence belongs to the UPRTase family. It depends on Mg(2+) as a cofactor.

It carries out the reaction UMP + diphosphate = 5-phospho-alpha-D-ribose 1-diphosphate + uracil. Its pathway is pyrimidine metabolism; UMP biosynthesis via salvage pathway; UMP from uracil: step 1/1. With respect to regulation, allosterically activated by GTP. Its function is as follows. Catalyzes the conversion of uracil and 5-phospho-alpha-D-ribose 1-diphosphate (PRPP) to UMP and diphosphate. This is Uracil phosphoribosyltransferase from Roseiflexus castenholzii (strain DSM 13941 / HLO8).